Reading from the N-terminus, the 1071-residue chain is SLIT-ROBO Rho GTPase-activating protein 2 (1071 aa).

Positions 22-325 (KEIRAQLTEQ…AVENLDATSD (304 aa)) constitute an F-BAR domain. Residues 181–203 (LKEAEKQEEKQIGKSVKQEDRQT) are compositionally biased toward basic and acidic residues. The segment at 181-211 (LKEAEKQEEKQIGKSVKQEDRQTPRSPDSTA) is disordered. Ser-206 is subject to Phosphoserine. Positions 362-401 (VQSELVQRCQQLQSRLSTLKIENEEVKKTMEATLQTIQDI) form a coiled coil. Residues Ser-427, Ser-500, Ser-691, and Ser-695 each carry the phosphoserine modification. A Rho-GAP domain is found at 489–679 (ARRSSTVRKQ…TIIIQHENIF (191 aa)). Positions 698 to 726 (DYCDSPHGETTSVEDSTQDVTAEHHTSDD) are disordered. A compositionally biased stretch (polar residues) spans 705-717 (GETTSVEDSTQDV). Ser-724 bears the Phosphoserine mark. The SH3 domain occupies 728–787 (CEPIEAIAKFDYVGRTARELSFKKGASLLLYQRASDDWWEGRHNGIDGLIPHQYIVVQDT). A Phosphoserine modification is found at Ser-795. The interval 837-936 (QRKRPESGSI…RSKSFNNHRP (100 aa)) is disordered. Positions 855 to 866 (HGLSSSLTDSSS) are enriched in low complexity. Polar residues-rich tracts occupy residues 874-885 (RPSSQPIMSQSL) and 897-907 (GHGSLNSISRH). A Phosphoserine modification is found at Ser-916. Over residues 919–933 (IRKTATAGRSKSFNN) the composition is skewed to polar residues. Arg-927 carries the symmetric dimethylarginine; by PRMT5 modification. Ser-930 carries the phosphoserine modification. Residues 940–967 (EVIAQDIEATMNSALNELRELERQSSVK) adopt a coiled-coil conformation. Positions 983–1012 (SPVVAPTSEPSSPLHTQLLKDPEPAFQRSA) are disordered. Phosphoserine is present on residues Ser-990, Ser-994, Ser-1013, and Ser-1027. The disordered stretch occupies residues 1029–1071 (KMAAPVKPPATRPKPTVFPKTNATSPGVNSSTSPQSTDKSCTV). The segment covering 1047-1071 (PKTNATSPGVNSSTSPQSTDKSCTV) has biased composition (polar residues).

In terms of assembly, homodimer. Heterodimer; forms a heterodimer with SRGAP2C, altering SRGAP2 function. Forms a heterooligomer with SRGAP1 and SRGAP3 through its F-BAR domain. Interacts (via SH3 domain) with GPHN. Interacts (via SH3 domain) with FMNL1 (activated by RAC1); regulates the actin filament severing activity of FMNL1 and actin dynamics. Interacts (via SH3 domain) with FMNL3. Interacts with RAC1; specifically stimulates RAC1 GTPase activity. Interacts (via F-BAR domain) with HOMER1. Interacts with ROBO1 and ROBO2. Interacts with FASLG. Interacts with PRMT5. Post-translationally, methylation at Arg-927 is required for the stimulation of cell migration, dimerization and localization at the plasma membrane protrusions.

It is found in the cell membrane. The protein resides in the cell projection. The protein localises to the dendritic spine. Its subcellular location is the postsynaptic density. It localises to the postsynaptic cell membrane. It is found in the lamellipodium. The protein resides in the cytoplasmic vesicle. The protein localises to the phagosome. Its subcellular location is the nucleus. It localises to the cytoplasm. It is found in the cytosol. Activity is strongly inhibited by SRGAP2C, which heterodimerize with SRGAP2/SRGAP2A, thereby reducing SRGAP2/SRGAP2A levels through proteasome-dependent degradation. In terms of biological role, postsynaptic RAC1 GTPase activating protein (GAP) that plays a key role in neuronal morphogenesis and migration mainly during development of the cerebral cortex. Regulates excitatory and inhibitory synapse maturation and density in cortical pyramidal neurons. SRGAP2/SRGAP2A limits excitatory and inhibitory synapse density through its RAC1-specific GTPase activating activity, while it promotes maturation of both excitatory and inhibitory synapses through its ability to bind to the postsynaptic scaffolding protein HOMER1 at excitatory synapses, and the postsynaptic protein GPHN at inhibitory synapses. Mechanistically, acts by binding and deforming membranes, thereby regulating actin dynamics to regulate cell migration and differentiation. Promotes cell repulsion and contact inhibition of locomotion: localizes to protrusions with curved edges and controls the duration of RAC1 activity in contact protrusions. In non-neuronal cells, may also play a role in cell migration by regulating the formation of lamellipodia and filopodia. This is SLIT-ROBO Rho GTPase-activating protein 2 from Homo sapiens (Human).